The chain runs to 362 residues: 3-dehydroquinate synthase (362 aa).

Residues 71–76 (DGEQYK), 105–109 (GVVGD), 129–130 (TT), Lys142, Lys151, and 169–172 (CLKT) contribute to the NAD(+) site. The Zn(2+) site is built by Glu184, His247, and His264.

The protein belongs to the sugar phosphate cyclases superfamily. Dehydroquinate synthase family. It depends on Co(2+) as a cofactor. Zn(2+) is required as a cofactor. Requires NAD(+) as cofactor.

Its subcellular location is the cytoplasm. The enzyme catalyses 7-phospho-2-dehydro-3-deoxy-D-arabino-heptonate = 3-dehydroquinate + phosphate. Its pathway is metabolic intermediate biosynthesis; chorismate biosynthesis; chorismate from D-erythrose 4-phosphate and phosphoenolpyruvate: step 2/7. Catalyzes the conversion of 3-deoxy-D-arabino-heptulosonate 7-phosphate (DAHP) to dehydroquinate (DHQ). The chain is 3-dehydroquinate synthase from Escherichia coli O127:H6 (strain E2348/69 / EPEC).